A 373-amino-acid chain; its full sequence is tRNA N6-adenosine threonylcarbamoyltransferase (373 aa).

3 residues coordinate a divalent metal cation: His-133, His-137, and Tyr-154. Residues 154-158, Asp-186, Gly-201, Glu-205, and Asn-302 each bind substrate; that span reads YVSGG. Asp-331 serves as a coordination point for a divalent metal cation.

The protein belongs to the KAE1 / TsaD family. In terms of assembly, component of the EKC/KEOPS complex composed of at least BUD32, CGI121, GON7, KAE1 and PCC1; the whole complex dimerizes. Requires a divalent metal cation as cofactor.

The protein localises to the cytoplasm. The protein resides in the nucleus. It catalyses the reaction L-threonylcarbamoyladenylate + adenosine(37) in tRNA = N(6)-L-threonylcarbamoyladenosine(37) in tRNA + AMP + H(+). Component of the EKC/KEOPS complex that is required for the formation of a threonylcarbamoyl group on adenosine at position 37 (t(6)A37) in tRNAs that read codons beginning with adenine. The complex is probably involved in the transfer of the threonylcarbamoyl moiety of threonylcarbamoyl-AMP (TC-AMP) to the N6 group of A37. KAE1 likely plays a direct catalytic role in this reaction, but requires other protein(s) of the complex to fulfill this activity. The EKC/KEOPS complex also promotes both telomere uncapping and telomere elongation. The complex is required for efficient recruitment of transcriptional coactivators. This Debaryomyces hansenii (strain ATCC 36239 / CBS 767 / BCRC 21394 / JCM 1990 / NBRC 0083 / IGC 2968) (Yeast) protein is tRNA N6-adenosine threonylcarbamoyltransferase.